The following is a 123-amino-acid chain: Small ribosomal subunit protein uS13 (123 aa).

Residues 96–123 (LPVRGQRTKTNARTRKGPKKTVGARRKK) form a disordered region.

The protein belongs to the universal ribosomal protein uS13 family. Part of the 30S ribosomal subunit. Forms a loose heterodimer with protein S19. Forms two bridges to the 50S subunit in the 70S ribosome.

Functionally, located at the top of the head of the 30S subunit, it contacts several helices of the 16S rRNA. In the 70S ribosome it contacts the 23S rRNA (bridge B1a) and protein L5 of the 50S subunit (bridge B1b), connecting the 2 subunits; these bridges are implicated in subunit movement. Contacts the tRNAs in the A and P-sites. The sequence is that of Small ribosomal subunit protein uS13 from Desulforamulus reducens (strain ATCC BAA-1160 / DSM 100696 / MI-1) (Desulfotomaculum reducens).